Consider the following 290-residue polypeptide: Agmatinase (290 aa).

The Mn(2+) site is built by histidine 112, aspartate 135, histidine 137, aspartate 139, aspartate 216, and aspartate 218.

The protein belongs to the arginase family. Agmatinase subfamily. It depends on Mn(2+) as a cofactor.

The enzyme catalyses agmatine + H2O = urea + putrescine. Its pathway is amine and polyamine biosynthesis; putrescine biosynthesis via agmatine pathway; putrescine from agmatine: step 1/1. Catalyzes the formation of putrescine from agmatine. In Bacillus cereus (strain ATCC 14579 / DSM 31 / CCUG 7414 / JCM 2152 / NBRC 15305 / NCIMB 9373 / NCTC 2599 / NRRL B-3711), this protein is Agmatinase (speB).